The sequence spans 29 residues: Serum amyloid P-component (29 aa).

Residues 6–29 (LGKVFVFSKESNVDDVKLLTPQTE) form the Pentraxin (PTX) domain.

Belongs to the pentraxin family. Homopentamer. Pentraxin (or pentaxin) have a discoid arrangement of 5 non-covalently bound subunits. It depends on Ca(2+) as a cofactor.

Its subcellular location is the secreted. This Hippoglossus hippoglossus (Atlantic halibut) protein is Serum amyloid P-component.